Here is a 146-residue protein sequence, read N- to C-terminus: Putative pre-16S rRNA nuclease (146 aa).

This sequence belongs to the YqgF nuclease family.

It localises to the cytoplasm. Could be a nuclease involved in processing of the 5'-end of pre-16S rRNA. The protein is Putative pre-16S rRNA nuclease of Pseudomonas syringae pv. syringae (strain B728a).